Here is a 321-residue protein sequence, read N- to C-terminus: Probable GDP-L-fucose synthase (321 aa).

8 to 14 (GGTGLVG) contributes to the NADP(+) binding site. Tyrosine 136 functions as the Proton donor/acceptor in the catalytic mechanism. Residues lysine 140, 163–166 (PCNI), and histidine 179 each bind NADP(+). Substrate contacts are provided by arginine 187, arginine 215, and aspartate 277.

This sequence belongs to the NAD(P)-dependent epimerase/dehydratase family. Fucose synthase subfamily. In terms of assembly, homodimer.

The catalysed reaction is GDP-beta-L-fucose + NADP(+) = GDP-4-dehydro-alpha-D-rhamnose + NADPH + H(+). It participates in nucleotide-sugar biosynthesis; GDP-L-fucose biosynthesis via de novo pathway; GDP-L-fucose from GDP-alpha-D-mannose: step 2/2. In terms of biological role, catalyzes the two-step NADP-dependent conversion of GDP-4-dehydro-6-deoxy-D-mannose to GDP-fucose, involving an epimerase and a reductase reaction. The polypeptide is Probable GDP-L-fucose synthase (Gmer) (Drosophila melanogaster (Fruit fly)).